A 516-amino-acid polypeptide reads, in one-letter code: uncharacterized protein (516 aa).

The next 9 membrane-spanning stretches (helical) occupy residues 183 to 203 (SAAD…GDGV), 261 to 281 (VLKT…TYII), 308 to 328 (VMNG…TALL), 329 to 349 (LDHQ…AYSF), 356 to 376 (LLDV…GQVL), 379 to 399 (LAFS…LALA), 430 to 450 (LGHG…FLAL), 461 to 481 (PAWL…IWLL), and 492 to 512 (IVFA…ASAF).

It is found in the cell membrane. Its function is as follows. Possible permease/transporter. This is an uncharacterized protein from Sinorhizobium fredii (strain NBRC 101917 / NGR234).